Reading from the N-terminus, the 162-residue chain is Large ribosomal subunit protein bL17 (162 aa).

Positions 125 to 140 (AAKEAPAKEVAEEKAA) are enriched in basic and acidic residues. The segment at 125–162 (AAKEAPAKEVAEEKAAKPAKKAAPKKAEKEEAEDAAEA) is disordered.

Belongs to the bacterial ribosomal protein bL17 family. In terms of assembly, part of the 50S ribosomal subunit. Contacts protein L32.

The chain is Large ribosomal subunit protein bL17 from Oleidesulfovibrio alaskensis (strain ATCC BAA-1058 / DSM 17464 / G20) (Desulfovibrio alaskensis).